We begin with the raw amino-acid sequence, 62 residues long: Conotoxin TxIC (62 aa).

Positions 1–22 are cleaved as a signal peptide; the sequence is MHCLPIFVILLLLTASGPSVDA. A propeptide spanning residues 23 to 47 is cleaved from the precursor; the sequence is QLKTKDDVPLSSFRDHAKSTLRRLQ. Disulfide bonds link Cys52/Cys58 and Cys53/Cys61. Residue Pro60 is modified to 4-hydroxyproline. Cys61 is subject to Cysteine amide.

The protein belongs to the conotoxin A superfamily. In terms of tissue distribution, expressed by the venom duct.

Its subcellular location is the secreted. This is Conotoxin TxIC from Conus textile (Cloth-of-gold cone).